Reading from the N-terminus, the 387-residue chain is GDP-mannose transporter (387 aa).

The span at 1–25 shows a compositional bias: basic and acidic residues; it reads MADTKKNDNYAIDMDKLDAESDRFR. Residues 1-42 lie on the Cytoplasmic side of the membrane; it reads MADTKKNDNYAIDMDKLDAESDRFRPPPQPQPRHSSSSHSQS. The tract at residues 1–45 is disordered; that stretch reads MADTKKNDNYAIDMDKLDAESDRFRPPPQPQPRHSSSSHSQSISN. The segment covering 32 to 45 has biased composition (low complexity); the sequence is PRHSSSSHSQSISN. The helical transmembrane segment at 43 to 63 threads the bilayer; that stretch reads ISNSPVLPILSYCASSILMTV. At 64–71 the chain is on the lumenal side; that stretch reads TNKYVLSG. The helical transmembrane segment at 72–92 threads the bilayer; that stretch reads VQFNLNFFLLCVQSVVCIIAI. The Cytoplasmic segment spans residues 93 to 112; that stretch reads QTCKSMGLINYRDFNSDEAK. The chain crosses the membrane as a helical span at residues 113–129; that stretch reads KWFPISLLLIGMIYTGT. The Lumenal portion of the chain corresponds to 130 to 136; the sequence is KALKFLS. The helical transmembrane segment at 137–153 threads the bilayer; it reads IPVYTIFKNLTIILIAY. Residues 154–162 are Cytoplasmic-facing; it reads GEVLWFGGS. Residues 163-184 form a helical membrane-spanning segment; that stretch reads VTGMALFSFGLMVLSSVIAAWA. Residues 185–206 lie on the Lumenal side of the membrane; sequence DIKHALDTSGFSGAEATSKIST. The helical transmembrane segment at 207-227 threads the bilayer; sequence LNAGYIWMLINCLCTSTYILG. Over 228-241 the chain is Cytoplasmic; that stretch reads MRKRIKLTNFKDFD. Residues 242–262 traverse the membrane as a helical segment; sequence TMFYNNLLSIPILMIGSFIVE. Topologically, residues 263–280 are lumenal; that stretch reads DWSSENINKNFPIETRNS. The helical transmembrane segment at 281-301 threads the bilayer; it reads LIFAMIFSGLSSVFISYTSAW. The Cytoplasmic segment spans residues 302-309; the sequence is CVRVTSST. The helical transmembrane segment at 310 to 329 threads the bilayer; sequence TYSMVGALNKLPIALSGLIF. Residues 330-332 are Lumenal-facing; that stretch reads FGD. Residues 333-355 form a helical membrane-spanning segment; the sequence is PVTVPSVSAIVVGFISGIVYSLA. At 356–387 the chain is on the cytoplasmic side; that stretch reads KVKQNAKPRTGVLPTTNPVSASTQSMRDGLKS. Residues 366–387 form a disordered region; that stretch reads GVLPTTNPVSASTQSMRDGLKS. A compositionally biased stretch (polar residues) spans 368-381; sequence LPTTNPVSASTQSM.

This sequence belongs to the TPT transporter family. SLC35D subfamily. As to quaternary structure, homooligomer.

Its subcellular location is the golgi apparatus membrane. The protein resides in the cytoplasmic vesicle membrane. It is found in the endoplasmic reticulum membrane. Its function is as follows. Involved in the import of GDP-mannose from the cytoplasm into the Golgi lumen. In Coccidioides immitis (strain RS) (Valley fever fungus), this protein is GDP-mannose transporter (VRG4).